The chain runs to 350 residues: Pleckstrin (350 aa).

One can recognise a PH 1 domain in the interval 4-101 (KRIREGYLVK…WVRDIKKAIK (98 aa)). An N6-acetyllysine modification is found at K64. S113 and S117 each carry phosphoserine; by PKC. Residues 136–221 (TEKGIKELNL…NPDAFYYFPD (86 aa)) form the DEP domain. Residues 244–347 (VIIKQGCLLK…WIRAIQMASR (104 aa)) enclose the PH 2 domain.

Functionally, major protein kinase C substrate of platelets. In Homo sapiens (Human), this protein is Pleckstrin (PLEK).